The chain runs to 115 residues: Small ribosomal subunit protein bS6 (115 aa).

Belongs to the bacterial ribosomal protein bS6 family.

Binds together with bS18 to 16S ribosomal RNA. In Picosynechococcus sp. (strain ATCC 27264 / PCC 7002 / PR-6) (Agmenellum quadruplicatum), this protein is Small ribosomal subunit protein bS6.